A 134-amino-acid polypeptide reads, in one-letter code: Protein NrdI (134 aa).

Belongs to the NrdI family.

Its function is as follows. Probably involved in ribonucleotide reductase function. The sequence is that of Protein NrdI from Chromohalobacter salexigens (strain ATCC BAA-138 / DSM 3043 / CIP 106854 / NCIMB 13768 / 1H11).